A 92-amino-acid chain; its full sequence is MQVSTAALAVLLCTMALCNQFSASLAADTPTACCFSYISRQIPQNFIADYFETSSQCSKPSVIFLTKRGRQVCADPSEEWVQKYVSDLELSA.

Residues Met-1–Ala-23 form the signal peptide. Cystine bridges form between Cys-33/Cys-57 and Cys-34/Cys-73.

The protein belongs to the intercrine beta (chemokine CC) family. As to quaternary structure, self-associates. Also heterodimer of MIP-1-alpha(4-69) and MIP-1-beta(3-69). Interacts with CCR1.

Its subcellular location is the secreted. Monokine with inflammatory and chemokinetic properties. Binds to CCR1, CCR4 and CCR5. One of the major HIV-suppressive factors produced by CD8+ T-cells. Recombinant MIP-1-alpha induces a dose-dependent inhibition of different strains of HIV-1, HIV-2, and simian immunodeficiency virus (SIV). In Pan troglodytes (Chimpanzee), this protein is C-C motif chemokine 3 (CCL3).